The primary structure comprises 1357 residues: MAYSYTEKKRIRKDFSKLPDVMDVPYLLAIQLDSYREFLQQGVSKEQFRDIGLHAAFKSVFPIISYSGNAALEYVGYRLGEPAFDVKECVLRGVTFAVPLRVKVRLIIFDKESSNKAIKDIKEQEVYMGEIPLMTENGTFVINGTERVIVSQLHRSPGVFFDHDRGKTHSSGKLLYSARIIPYRGSWLDFEFDPKDAVFVRIDRRRKLPASVLLRALGYSTEEVLDAFYDTNVFHVKNESLSLELVPQRLRGEVAVLDIKDASGKVIVEQGRRITARHINQLDKAGIKELEVPLDYVIGRTTAKAIVHPATGEIIAECNTELTADLLAKMAKANVVRFETLYTNDIDCGPFISDTLKIDSTTNQLEALVEIYRMMRPGEPPTKDAAETLFNNLFFSAERYDLSAVGRMKFNRRIGRTEIEGSGVLSKEDIVAVLKTLVDIRNGKGIVDDIDHLGNRRVRCVGEMAENQFRVGLVRVERAVKERLSMAESEGLMPQDLINAKPVAAAVKEFFGSSQLSQFMDQNNPLSEITHKRRVSALGPGGLTRERAGFEVRDVHPTHYGRVCPIETPEGPNIGLINSLAAYARTNQYGFLESPYRVVKEGKVTDEIVFLSAIEEADHVIAQASATLNDKGELVDELVAVRHLNEFTVKAPEDVTLMDVSPKQVVSVAASLIPFLEHDDANRALMGSNMQRQAVPTLRADKPLVGTGMERNVARDSGVCVVARRGGVIDSVDASRIVVRVNDDEVETGEAGVDIYNLTKYTRSNQNTCINQRPLVSKGDQVARGDIMADGPSTDMGELALGQNMRVAFMPWNGFNFEDSICLSERVVQEDRFTTIHIQELTCVARDTKLGPEEISSDIPNVGEAALNKLDEAGIVYVGAEVGPGDILVGKVTPKGETQLTPEEKLLRAIFGEKASDVKDTSLRVPTGTKGTVIDVQVFTRDGVERDSRALAIEKQQLDEIRKDLNEEFRIVEGATFERLRSALVGAIAEGGAGLKKGTAITDEFLDGLERGQWFKLRMADDALNEQLEKAQAYISDRRQMLDDKFEDKKRKLQQGDDLAPGVLKIVKVYLAIRRRIQPGDKMAGRHGNKGVVSVIMPVEDMPHDANGTPVDIVLNPLGVPSRMNVGQILETHLGLAAKGLGEKINRMLEEQRKVAELRKFLAEIYNEIGGRQENLDEFSDNEILELAKNLKGGVPMATAVFDGAKETEIKAMLKLADLPESGQMRLFDGRTGNQFERPTTVGYMYMLKLNHLVDDKMHARSTGSYSLVTQQPLGGKAQFGGQRFGEMEVWALEAYGAAYTLQEMLTVKSDDVNGRTKMYKNIVDGDHRMEPGMPESFNVLIKEIRSLGIDIDLETE.

It belongs to the RNA polymerase beta chain family. The RNAP catalytic core consists of 2 alpha, 1 beta, 1 beta' and 1 omega subunit. When a sigma factor is associated with the core the holoenzyme is formed, which can initiate transcription.

It catalyses the reaction RNA(n) + a ribonucleoside 5'-triphosphate = RNA(n+1) + diphosphate. Its function is as follows. DNA-dependent RNA polymerase catalyzes the transcription of DNA into RNA using the four ribonucleoside triphosphates as substrates. This Ectopseudomonas mendocina (strain ymp) (Pseudomonas mendocina) protein is DNA-directed RNA polymerase subunit beta.